The primary structure comprises 501 residues: Lysine--tRNA ligase (501 aa).

Positions 411 and 418 each coordinate Mg(2+).

The protein belongs to the class-II aminoacyl-tRNA synthetase family. Homodimer. Mg(2+) is required as a cofactor.

It is found in the cytoplasm. It carries out the reaction tRNA(Lys) + L-lysine + ATP = L-lysyl-tRNA(Lys) + AMP + diphosphate. This chain is Lysine--tRNA ligase, found in Clostridium perfringens (strain SM101 / Type A).